A 534-amino-acid chain; its full sequence is 5'-nucleotidase domain-containing protein 3 (534 aa).

Catalysis depends on aspartate 104, which acts as the Nucleophile. Mg(2+) is bound by residues aspartate 104 and aspartate 106. Aspartate 106 serves as the catalytic Proton donor. 234–242 (KEAIRDVHV) lines the substrate pocket. A Mg(2+)-binding site is contributed by aspartate 372.

The protein belongs to the 5'(3')-deoxyribonucleotidase family. Mg(2+) is required as a cofactor.

This chain is 5'-nucleotidase domain-containing protein 3 (nt5dc3), found in Xenopus tropicalis (Western clawed frog).